The following is a 571-amino-acid chain: Urease subunit alpha (571 aa).

One can recognise a Urease domain in the interval 134 to 571 (GAIDTHIHFI…LPMAQRYFLF (438 aa)). Positions 139, 141, and 222 each coordinate Ni(2+). Lys222 bears the N6-carboxylysine mark. Residue His224 coordinates substrate. His251 and His277 together coordinate Ni(2+). The active-site Proton donor is the His325. Asp365 contacts Ni(2+).

Belongs to the metallo-dependent hydrolases superfamily. Urease alpha subunit family. As to quaternary structure, heterotrimer of UreA (gamma), UreB (beta) and UreC (alpha) subunits. Three heterotrimers associate to form the active enzyme. Ni cation is required as a cofactor. In terms of processing, carboxylation allows a single lysine to coordinate two nickel ions.

Its subcellular location is the cytoplasm. It carries out the reaction urea + 2 H2O + H(+) = hydrogencarbonate + 2 NH4(+). It functions in the pathway nitrogen metabolism; urea degradation; CO(2) and NH(3) from urea (urease route): step 1/1. This is Urease subunit alpha from Bordetella pertussis (strain Tohama I / ATCC BAA-589 / NCTC 13251).